A 102-amino-acid polypeptide reads, in one-letter code: Aspartyl/glutamyl-tRNA(Asn/Gln) amidotransferase subunit C (102 aa).

It belongs to the GatC family. As to quaternary structure, heterotrimer of A, B and C subunits.

The catalysed reaction is L-glutamyl-tRNA(Gln) + L-glutamine + ATP + H2O = L-glutaminyl-tRNA(Gln) + L-glutamate + ADP + phosphate + H(+). It carries out the reaction L-aspartyl-tRNA(Asn) + L-glutamine + ATP + H2O = L-asparaginyl-tRNA(Asn) + L-glutamate + ADP + phosphate + 2 H(+). Its function is as follows. Allows the formation of correctly charged Asn-tRNA(Asn) or Gln-tRNA(Gln) through the transamidation of misacylated Asp-tRNA(Asn) or Glu-tRNA(Gln) in organisms which lack either or both of asparaginyl-tRNA or glutaminyl-tRNA synthetases. The reaction takes place in the presence of glutamine and ATP through an activated phospho-Asp-tRNA(Asn) or phospho-Glu-tRNA(Gln). The polypeptide is Aspartyl/glutamyl-tRNA(Asn/Gln) amidotransferase subunit C (Bordetella petrii (strain ATCC BAA-461 / DSM 12804 / CCUG 43448)).